The following is a 391-amino-acid chain: MGKNLLEQLRQFTVVVADTGDIQAIETFTPRDSTTNPSLITAAAQMPQYQEIVDSTLLKAKDEAGENASIKDIVRLAFDRLAVAFGLKILQIIPGRVSTEVDARLSYDTEATIAKARYLIGEYAKAGIDKKRILIKIASTWEGIKAAEVLEQEGIHCNLTLLFGLHQAIACAEAKVTLISPFVGRILDWYKKSTGKEYDSHEDPGVQSVTTIYNYYKRFGYKTEVMGASFRNIGEIIELAGCDLLTISPQLLDQLRNTEGDLPRKLDPATVPQDIEKIVMDKATFDKMHAEDPMASEKLAEGIAGFTKALEVLEHLLEERLKVLDGQEHIKHGAEEIFHAYDLDGDGFITREEWAGTDVVFDALDRDHDGKITAAEMSAGLGAAFRLASVG.

The tract at residues 1–329 is transaldolase; it reads MGKNLLEQLR…RLKVLDGQEH (329 aa). Residue Lys136 is the Schiff-base intermediate with substrate of the active site. 2 consecutive EF-hand domains span residues 329-364 and 365-387; these read HIKHGAEEIFHAYDLDGDGFITREEWAGTDVVFDAL and DRDHDGKITAAEMSAGLGAAFRL. Residues Asp342, Asp344, Asp346, Glu353, Asp365, Asp367, Asp369, Lys371, and Glu376 each coordinate Ca(2+).

It belongs to the transaldolase family. Type 1 subfamily.

Its subcellular location is the cytoplasm. It carries out the reaction D-sedoheptulose 7-phosphate + D-glyceraldehyde 3-phosphate = D-erythrose 4-phosphate + beta-D-fructose 6-phosphate. It functions in the pathway carbohydrate degradation; pentose phosphate pathway; D-glyceraldehyde 3-phosphate and beta-D-fructose 6-phosphate from D-ribose 5-phosphate and D-xylulose 5-phosphate (non-oxidative stage): step 2/3. Transaldolase is important for the balance of metabolites in the pentose-phosphate pathway. This chain is Transaldolase, found in Synechocystis sp. (strain ATCC 27184 / PCC 6803 / Kazusa).